Reading from the N-terminus, the 567-residue chain is Sporulation-specific protein 5 (567 aa).

Residues 1–18 show a composition bias toward polar residues; the sequence is MNGIITPQKQKQLMSSPS. 2 disordered regions span residues 1 to 39 and 52 to 76; these read MNGI…VDVN and ILLT…KKPN. A compositionally biased stretch (low complexity) spans 21 to 35; the sequence is PLSTTELSTPTSQTT. The segment covering 56–66 has biased composition (polar residues); the sequence is PGTSPNATPGS. RRM domains lie at 296-380 and 384-462; these read RNVY…SLQD and TNLY…FADS.

The protein localises to the cytoplasm. Functionally, RNA-binding protein which plays a role in sporulation. Regulates the progression of meiosis I and may function in the vicinity of the Mei2 dot. This is Sporulation-specific protein 5 (spo5) from Schizosaccharomyces pombe (strain 972 / ATCC 24843) (Fission yeast).